We begin with the raw amino-acid sequence, 491 residues long: UDP-N-acetylmuramate--L-alanine ligase (491 aa).

126–132 (GTHGKTT) contributes to the ATP binding site.

This sequence belongs to the MurCDEF family.

Its subcellular location is the cytoplasm. It carries out the reaction UDP-N-acetyl-alpha-D-muramate + L-alanine + ATP = UDP-N-acetyl-alpha-D-muramoyl-L-alanine + ADP + phosphate + H(+). Its pathway is cell wall biogenesis; peptidoglycan biosynthesis. In terms of biological role, cell wall formation. In Enterobacter sp. (strain 638), this protein is UDP-N-acetylmuramate--L-alanine ligase.